The sequence spans 514 residues: MATLAMSTPSSPTWPKRRPKAWAMRCERYCCAAASYFPLAFVYSLTTWAVYVEASVGLKPSSSSWIGLPSSILGVVLYLALNISYTTAVFTDPGSPLGARSGGGHPYSALPITELPEYTSYTVNSTGGSRFCKKCQCPKPDRAHHCSTCKRCVLKMDHHCPWLATCVGLRNYKAFLLFLIYTSLFCWVDFGVSAIWIWTEVFNDTRYMDGILPVNVVLLSILGGIIGLVLTGFTAWHISLATRGLTTIECLEKTRYVSPLRKALDRHRYDGLLGTNTGGENQDTFGSRLQNYGNQILDAHANAIPGVTRPEEGEESSDNLTPAQQALSRSYADLERQREHDRYEDYLAELDNEKMPHAFDLGWKRNLLHLFGDRPLHWLVPTPTTTGNGWEWEPSRKFLEAQERVRQQREQVAEQQRQHQRDLYLRNMNNSRAWLGNELPPGWTPDQPLSHSDDVARPATGVSMKTLAPRSPRPRPGEEVYAEDLDKDDFVLEPTRGKGSGNQSSREDDWRDWD.

At 1 to 31 the chain is on the cytoplasmic side; that stretch reads MATLAMSTPSSPTWPKRRPKAWAMRCERYCC. The chain crosses the membrane as a helical span at residues 32–52; it reads AAASYFPLAFVYSLTTWAVYV. Topologically, residues 53–64 are lumenal; sequence EASVGLKPSSSS. Residues 65–85 traverse the membrane as a helical segment; sequence WIGLPSSILGVVLYLALNISY. The Cytoplasmic portion of the chain corresponds to 86-174; that stretch reads TTAVFTDPGS…TCVGLRNYKA (89 aa). The 51-residue stretch at 130-180 folds into the DHHC domain; sequence RFCKKCQCPKPDRAHHCSTCKRCVLKMDHHCPWLATCVGLRNYKAFLLFLI. A helical transmembrane segment spans residues 175–195; sequence FLLFLIYTSLFCWVDFGVSAI. Residues 196-209 lie on the Lumenal side of the membrane; it reads WIWTEVFNDTRYMD. A helical membrane pass occupies residues 210 to 230; the sequence is GILPVNVVLLSILGGIIGLVL. Residues 231-514 are Cytoplasmic-facing; it reads TGFTAWHISL…SREDDWRDWD (284 aa). Disordered stretches follow at residues 307–336 and 436–514; these read VTRPEEGEESSDNLTPAQQALSRSYADLER and GNEL…RDWD. Positions 318–328 are enriched in polar residues; it reads DNLTPAQQALS. Over residues 505-514 the composition is skewed to basic and acidic residues; sequence SREDDWRDWD.

Belongs to the DHHC palmitoyltransferase family. PFA3 subfamily. Autopalmitoylated.

The protein localises to the vacuole membrane. It catalyses the reaction L-cysteinyl-[protein] + hexadecanoyl-CoA = S-hexadecanoyl-L-cysteinyl-[protein] + CoA. Palmitoyltransferase specific for VAC8. Palmitoylates VAC8 at one or more of its N-terminal cysteine residues, which is required for its proper membrane localization. The sequence is that of Palmitoyltransferase pfa3 (pfa3) from Emericella nidulans (strain FGSC A4 / ATCC 38163 / CBS 112.46 / NRRL 194 / M139) (Aspergillus nidulans).